Here is a 487-residue protein sequence, read N- to C-terminus: Chromosomal replication initiator protein DnaA (487 aa).

The segment at 1–79 is domain I, interacts with DnaA modulators; that stretch reads MPNSMWHQCL…QAPRVMMKVG (79 aa). The disordered stretch occupies residues 78-138; sequence VGSAPKPTDP…PAPKAQAERR (61 aa). The domain II stretch occupies residues 79 to 150; the sequence is GSAPKPTDPV…QVEGDIKHQS (72 aa). The domain III, AAA+ region stretch occupies residues 151–367; the sequence is FLNETFTFDT…GALRLVIANA (217 aa). 4 residues coordinate ATP: Gly195, Gly197, Lys198, and Thr199. Positions 368-487 are domain IV, binds dsDNA; sequence HFTGSEITPP…YQNFMRLLTT (120 aa).

This sequence belongs to the DnaA family. As to quaternary structure, oligomerizes as a right-handed, spiral filament on DNA at oriC.

It localises to the cytoplasm. Plays an essential role in the initiation and regulation of chromosomal replication. ATP-DnaA binds to the origin of replication (oriC) to initiate formation of the DNA replication initiation complex once per cell cycle. Binds the DnaA box (a 9 base pair repeat at the origin) and separates the double-stranded (ds)DNA. Forms a right-handed helical filament on oriC DNA; dsDNA binds to the exterior of the filament while single-stranded (ss)DNA is stabiized in the filament's interior. The ATP-DnaA-oriC complex binds and stabilizes one strand of the AT-rich DNA unwinding element (DUE), permitting loading of DNA polymerase. After initiation quickly degrades to an ADP-DnaA complex that is not apt for DNA replication. Binds acidic phospholipids. The sequence is that of Chromosomal replication initiator protein DnaA from Marinobacter nauticus (strain ATCC 700491 / DSM 11845 / VT8) (Marinobacter aquaeolei).